A 506-amino-acid chain; its full sequence is UDP-N-acetylglucosamine--peptide N-acetylglucosaminyltransferase GtfA subunit (506 aa).

The tract at residues 1–78 is N-terminus R-fold-1; that stretch reads MTVYNINLGI…FTDIKIAPTT (78 aa). 16 to 19 is a binding site for UDP; the sequence is GVEY. The extended beta-sheet domain stretch occupies residues 79 to 195; it reads VTLDQVLAQV…LYRFPDRIFY (117 aa). The tract at residues 196–306 is C-terminus R-fold-1; it reads SKAELVRYFL…QPQIATIPVG (111 aa). Residue H242 coordinates N-acetyl-D-glucosamine. Residues 307 to 506 form an R-fold-2 region; sequence SLDQLTYPKE…LKEVRDDSAL (200 aa). UDP-binding positions include R328, Y357, and 383-385; that span reads GHA. 405 to 407 is an N-acetyl-D-glucosamine binding site; it reads GFG. Residue T409 coordinates UDP.

It belongs to the glycosyltransferase group 1 family. Glycosyltransferase 4 subfamily. In terms of assembly, forms a heterotetramer with 2 subunits each of GtfA and GtfB. Part of the accessory SecA2/SecY2 protein translocation apparatus required to export cell wall protein GspB.

It localises to the cytoplasm. The protein localises to the cell membrane. It carries out the reaction L-seryl-[protein] + UDP-N-acetyl-alpha-D-glucosamine = 3-O-[N-acetyl-alpha-D-glucosaminyl]-L-seryl-[protein] + UDP + H(+). It functions in the pathway protein modification; protein glycosylation. Required for polymorphic O-glycosylation of GspB, a serine-rich repeat cell wall protein encoded upstream in the same operon. Catalyzes the first step in glycosylation by transferring N-acetylglucosamine from UDP-GlcNAc to serine residues in GspB. Part of the accessory SecA2/SecY2 system specifically required to export GspB. Upon coexpression in E.coli with GtfB glycosylates GspB constructs. Glycosylation probably occurs intracellularly. Requires GtfB for glycosylation activity, it has no activity alone. Does not use UDP-glucose as substrate. Has a fast, probably processive glycosylation phase followed by a slower, non-processive phase. The enzyme probably modifies its tertiary conformation by opening and closing its intersubunit interfaces to accomodate the increasingly glycosylated substrate; protein substrate recognition is provided by GtfB. This Streptococcus gordonii protein is UDP-N-acetylglucosamine--peptide N-acetylglucosaminyltransferase GtfA subunit.